Reading from the N-terminus, the 255-residue chain is 3-deoxy-manno-octulosonate cytidylyltransferase (255 aa).

This sequence belongs to the KdsB family.

The protein localises to the cytoplasm. It catalyses the reaction 3-deoxy-alpha-D-manno-oct-2-ulosonate + CTP = CMP-3-deoxy-beta-D-manno-octulosonate + diphosphate. It participates in nucleotide-sugar biosynthesis; CMP-3-deoxy-D-manno-octulosonate biosynthesis; CMP-3-deoxy-D-manno-octulosonate from 3-deoxy-D-manno-octulosonate and CTP: step 1/1. The protein operates within bacterial outer membrane biogenesis; lipopolysaccharide biosynthesis. Functionally, activates KDO (a required 8-carbon sugar) for incorporation into bacterial lipopolysaccharide in Gram-negative bacteria. This is 3-deoxy-manno-octulosonate cytidylyltransferase from Psychromonas ingrahamii (strain DSM 17664 / CCUG 51855 / 37).